Consider the following 254-residue polypeptide: Citrate synthase-lysine N-methyltransferase CSKMT, mitochondrial (254 aa).

Residues 1–45 constitute a mitochondrion transit peptide; the sequence is MLLNRFLVPLRSLQKLTQARRWHQTSLINDLVVNMDKKAMWDRFY.

It belongs to the methyltransferase superfamily.

The protein localises to the mitochondrion. It catalyses the reaction L-lysyl-[citrate synthase] + S-adenosyl-L-methionine = N(6)-methyl-L-lysyl-[citrate synthase] + S-adenosyl-L-homocysteine + H(+). The catalysed reaction is N(6)-methyl-L-lysyl-[citrate synthase] + S-adenosyl-L-methionine = N(6),N(6)-dimethyl-L-lysyl-[citrate synthase] + S-adenosyl-L-homocysteine + H(+). The enzyme catalyses N(6),N(6)-dimethyl-L-lysyl-[citrate synthase] + S-adenosyl-L-methionine = N(6),N(6),N(6)-trimethyl-L-lysyl-[citrate synthase] + S-adenosyl-L-homocysteine + H(+). With respect to regulation, citrate synthase-lysine methyltransferase activity is inhibited by S-adenosylhomocysteine (AdoHcy) and oxaloacetate (OAA). In terms of biological role, protein-lysine methyltransferase that selectively trimethylates citrate synthase (CS) in mitochondria. Seems to conduct trimethylation in a highly distributive manner rather than in a processive manner, and thus introduces a single methyl group per binding event. This Danio rerio (Zebrafish) protein is Citrate synthase-lysine N-methyltransferase CSKMT, mitochondrial.